Here is a 950-residue protein sequence, read N- to C-terminus: Glycine dehydrogenase (decarboxylating) (950 aa).

Position 698 is an N6-(pyridoxal phosphate)lysine (lysine 698).

This sequence belongs to the GcvP family. The glycine cleavage system is composed of four proteins: P, T, L and H. The cofactor is pyridoxal 5'-phosphate.

The catalysed reaction is N(6)-[(R)-lipoyl]-L-lysyl-[glycine-cleavage complex H protein] + glycine + H(+) = N(6)-[(R)-S(8)-aminomethyldihydrolipoyl]-L-lysyl-[glycine-cleavage complex H protein] + CO2. Functionally, the glycine cleavage system catalyzes the degradation of glycine. The P protein binds the alpha-amino group of glycine through its pyridoxal phosphate cofactor; CO(2) is released and the remaining methylamine moiety is then transferred to the lipoamide cofactor of the H protein. In Neisseria gonorrhoeae (strain ATCC 700825 / FA 1090), this protein is Glycine dehydrogenase (decarboxylating).